Here is a 189-residue protein sequence, read N- to C-terminus: High affinity copper uptake protein 1 (189 aa).

The Extracellular portion of the chain corresponds to 1–67; sequence MDHSAHMGMS…AGLVINTAGE (67 aa). Positions 13-18 match the Methionine segments (Mets) motif motif; it reads MGMSDM. The interval 15 to 36 is disordered; that stretch reads MSDMNHSTTMPPSHHHPTSSGS. Residues 20 to 36 are compositionally biased toward low complexity; it reads HSTTMPPSHHHPTSSGS. The chain crosses the membrane as a helical span at residues 68–88; it reads MAGAFVAVFLLAMFYEGLKIA. Residues 89–131 lie on the Cytoplasmic side of the membrane; it reads REGLLRKSQVSIRYNSMPVPGPNGTILMETHKTVGQQMLSFPH. Thr113 bears the Phosphothreonine mark. A helical membrane pass occupies residues 132–152; the sequence is LLQTVLHIIQVVISYFLMLIF. Residues 153 to 155 are Extracellular-facing; sequence MTY. The helical transmembrane segment at 156 to 176 threads the bilayer; that stretch reads NGYLCIAVAAGAGTGYFLFSW. Over 177–189 the chain is Cytoplasmic; sequence KKAVVVDITEHCH. A Cysteine sulfenic acid (-SOH) modification is found at Cys188.

Belongs to the copper transporter (Ctr) (TC 1.A.56) family. SLC31A subfamily. In terms of assembly, homotrimer; is stabilized by cisplatin via interactions between cisplatin and the methionine-rich clusters, and could be crucial for the copper(2+) reduction process and copper(1+) stabilization. Heterotrimer between SLC31A1, CCS and SOD1; this heterotrimer is copper(1+)-mediated and its maintenance is regulated through SOD1 activation. Interacts with KDR; this interaction is induced upon VEGFA stimulation leading to SLC31A1 and KDR subsequent co-internalization to early endosomes, thereby activating KDR downstream signaling in endothelial cells. Interacts (via C-terminal domain) with ATOX1 (via dimer form); this interaction improves ATOX1 stability and controls intracellular copper(1+) levels. Interacts with SLC31A2; this interaction stabilizes SLC31A2 and protects its from ubiquitination and degradation. Interacts (via C-terminal domain) with CCS; this interaction is copper(1+)-mediated. Post-translationally, proteolytic cleavage, leading to a truncated form, is facilitated by SLC31A2 and initiated preferentially by CTSL and to a minor extend by CTSB in endolysosomal compartments. A post-CTSL/cathepsin L processing occurs to yield to the fully truncated form. Sulfenylated at Cys-188 after stimulation with VEGFA, which induces SLC31A1-KDR disulfide bond formation and their co-internalization to early endosomes, driving to a sustained VEGFR2 signaling.

It is found in the cell membrane. Its subcellular location is the early endosome membrane. The protein localises to the recycling endosome membrane. It localises to the apical cell membrane. The protein resides in the late endosome membrane. It is found in the basolateral cell membrane. The catalysed reaction is Ag(+)(out) = Ag(+)(in). It carries out the reaction Cu(+)(out) = Cu(+)(in). Uniporter that mediates the transport of copper(1+) from the extracellular space to the cytoplasm, across the plasma membrane and delivers directly copper(1+) to specific chaperone such as ATOX1, via a copper(1+)- mediated transient interaction between the C-terminal domain and a copper(1+) chaperone, thus controlling intracellular copper(1+) levels. May function in copper(1+) import from the apical membrane thus may drive intestinal copper absorption. The copper(1+) transport mechanism is sodium-independent, saturable and of high-affinity. Also mediates the uptake of silver(1+). May function in the influx of the platinum-containing chemotherapeutic agents. The platinum-containing chemotherapeutic agents uptake is saturable. In vitro, mediates the transport of cadmium(2+) into cells. Also participates in the first step of copper(2+) acquisition by cells through a direct transfer of copper(2+) from copper(2+) carriers in blood, such as ALB to the N-terminal domain of SLC31A1, leading to copper(2+) reduction and probably followed by copper(1+) stabilization. In addition, functions as a redox sensor to promote angiogenesis in endothelial cells, in a copper(1+) transport independent manner, by transmitting the VEGF-induced ROS signal through a sulfenylation at Cys-189 leadin g to a subsequent disulfide bond formation between SLC31A1 and KDR. The SLC31A1-KDR complex is then co-internalized to early endosomes, driving a sustained VEGFR2 signaling. Its function is as follows. Mobilizes copper(1+) out of the endosomal compartment, making copper(1+) available for export out of the cells. This is High affinity copper uptake protein 1 from Sus scrofa (Pig).